The following is a 153-amino-acid chain: Histone H2B.3 (153 aa).

Composition is skewed to basic and acidic residues over residues 1–10 (MAPKKDEKPA) and 20–54 (AKAEAKPKAEKAGKKAKKEPAKKAAKEPKGDGEKK). Residues 1-60 (MAPKKDEKPATAEAGAEAPAKAEAKPKAEKAGKKAKKEPAKKAAKEPKGDGEKKDKKKKK) form a disordered region. An N6-acetyllysine mark is found at K41 and K42. K149 is covalently cross-linked (Glycyl lysine isopeptide (Lys-Gly) (interchain with G-Cter in ubiquitin)).

Belongs to the histone H2B family. The nucleosome is a histone octamer containing two molecules each of H2A, H2B, H3 and H4 assembled in one H3-H4 heterotetramer and two H2A-H2B heterodimers. The octamer wraps approximately 147 bp of DNA. In terms of processing, the N-terminus is blocked. Post-translationally, can be acetylated to form H2BK33ac and H2BK34ac. Acetylated mainly on the ubiquitinated form. Monoubiquitinated to form H2BK143ub1; which is increased during the light period and may give a specific tag for epigenetic transcriptional activation.

The protein localises to the nucleus. It localises to the chromosome. Its function is as follows. Core component of nucleosome. Nucleosomes wrap and compact DNA into chromatin, limiting DNA accessibility to the cellular machineries which require DNA as a template. Histones thereby play a central role in transcription regulation, DNA repair, DNA replication and chromosomal stability. DNA accessibility is regulated via a complex set of post-translational modifications of histones, also called histone code, and nucleosome remodeling. In Chlamydomonas reinhardtii (Chlamydomonas smithii), this protein is Histone H2B.3.